A 424-amino-acid chain; its full sequence is Gamma-glutamyl phosphate reductase (424 aa).

This sequence belongs to the gamma-glutamyl phosphate reductase family.

It localises to the cytoplasm. The catalysed reaction is L-glutamate 5-semialdehyde + phosphate + NADP(+) = L-glutamyl 5-phosphate + NADPH + H(+). Its pathway is amino-acid biosynthesis; L-proline biosynthesis; L-glutamate 5-semialdehyde from L-glutamate: step 2/2. Its function is as follows. Catalyzes the NADPH-dependent reduction of L-glutamate 5-phosphate into L-glutamate 5-semialdehyde and phosphate. The product spontaneously undergoes cyclization to form 1-pyrroline-5-carboxylate. The chain is Gamma-glutamyl phosphate reductase from Shewanella sediminis (strain HAW-EB3).